Reading from the N-terminus, the 114-residue chain is T cell receptor beta variable 5-5 (114 aa).

The first 21 residues, methionine 1–alanine 21, serve as a signal peptide directing secretion. An Ig-like domain is found at glycine 22 to leucine 114. Cysteine 42 and cysteine 110 are joined by a disulfide. Asparagine 90 carries N-linked (GlcNAc...) asparagine glycosylation.

In terms of assembly, alpha-beta TR is a heterodimer composed of an alpha and beta chain; disulfide-linked. The alpha-beta TR is associated with the transmembrane signaling CD3 coreceptor proteins to form the TR-CD3 (TcR or TCR). The assembly of alpha-beta TR heterodimers with CD3 occurs in the endoplasmic reticulum where a single alpha-beta TR heterodimer associates with one CD3D-CD3E heterodimer, one CD3G-CD3E heterodimer and one CD247 homodimer forming a stable octameric structure. CD3D-CD3E and CD3G-CD3E heterodimers preferentially associate with TR alpha and TR beta chains, respectively. The association of the CD247 homodimer is the last step of TcR assembly in the endoplasmic reticulum and is required for transport to the cell surface.

The protein resides in the cell membrane. Its function is as follows. V region of the variable domain of T cell receptor (TR) beta chain that participates in the antigen recognition. Alpha-beta T cell receptors are antigen specific receptors which are essential to the immune response and are present on the cell surface of T lymphocytes. Recognize peptide-major histocompatibility (MH) (pMH) complexes that are displayed by antigen presenting cells (APC), a prerequisite for efficient T cell adaptive immunity against pathogens. Binding of alpha-beta TR to pMH complex initiates TR-CD3 clustering on the cell surface and intracellular activation of LCK that phosphorylates the ITAM motifs of CD3G, CD3D, CD3E and CD247 enabling the recruitment of ZAP70. In turn ZAP70 phosphorylates LAT, which recruits numerous signaling molecules to form the LAT signalosome. The LAT signalosome propagates signal branching to three major signaling pathways, the calcium, the mitogen-activated protein kinase (MAPK) kinase and the nuclear factor NF-kappa-B (NF-kB) pathways, leading to the mobilization of transcription factors that are critical for gene expression and essential for T cell growth and differentiation. The T cell repertoire is generated in the thymus, by V-(D)-J rearrangement. This repertoire is then shaped by intrathymic selection events to generate a peripheral T cell pool of self-MH restricted, non-autoaggressive T cells. Post-thymic interaction of alpha-beta TR with the pMH complexes shapes TR structural and functional avidity. The sequence is that of T cell receptor beta variable 5-5 from Homo sapiens (Human).